A 194-amino-acid polypeptide reads, in one-letter code: CASP-like protein 2C1 (194 aa).

Residues Met1–Thr18 are Cytoplasmic-facing. A helical membrane pass occupies residues Glu19–Leu39. Residues Asn40–Gln59 lie on the Extracellular side of the membrane. Residues Ala60–Leu80 form a helical membrane-spanning segment. The Cytoplasmic portion of the chain corresponds to Arg81–Lys109. The helical transmembrane segment at Gly110 to Leu130 threads the bilayer. Topologically, residues Tyr131–Gln151 are extracellular. Residues Val152–Val172 form a helical membrane-spanning segment. The Cytoplasmic portion of the chain corresponds to Ser173–Gly194.

This sequence belongs to the Casparian strip membrane proteins (CASP) family. Homodimer and heterodimers.

The protein localises to the cell membrane. This Oryza sativa subsp. japonica (Rice) protein is CASP-like protein 2C1.